The following is a 162-amino-acid chain: Probable chemoreceptor glutamine deamidase CheD 3 (162 aa).

It belongs to the CheD family.

The catalysed reaction is L-glutaminyl-[protein] + H2O = L-glutamyl-[protein] + NH4(+). Its function is as follows. Probably deamidates glutamine residues to glutamate on methyl-accepting chemotaxis receptors (MCPs), playing an important role in chemotaxis. This chain is Probable chemoreceptor glutamine deamidase CheD 3, found in Geobacter sulfurreducens (strain ATCC 51573 / DSM 12127 / PCA).